Reading from the N-terminus, the 77-residue chain is SS18-like protein 2 (77 aa).

Residues 50 to 53 (YQHV) carry the SH2-binding motif.

It belongs to the SS18 family.

This is SS18-like protein 2 (Ss18l2) from Mus musculus (Mouse).